We begin with the raw amino-acid sequence, 310 residues long: Ribosomal RNA small subunit methyltransferase H (310 aa).

Residues 33–35 (AGH), Asp-53, Tyr-83, Asp-100, and Gln-107 each bind S-adenosyl-L-methionine.

Belongs to the methyltransferase superfamily. RsmH family.

The protein localises to the cytoplasm. It catalyses the reaction cytidine(1402) in 16S rRNA + S-adenosyl-L-methionine = N(4)-methylcytidine(1402) in 16S rRNA + S-adenosyl-L-homocysteine + H(+). Functionally, specifically methylates the N4 position of cytidine in position 1402 (C1402) of 16S rRNA. The polypeptide is Ribosomal RNA small subunit methyltransferase H (Clostridium perfringens (strain ATCC 13124 / DSM 756 / JCM 1290 / NCIMB 6125 / NCTC 8237 / Type A)).